A 249-amino-acid chain; its full sequence is Probable transcriptional regulatory protein Dtur_1615 (249 aa).

The protein belongs to the TACO1 family.

The protein localises to the cytoplasm. This Dictyoglomus turgidum (strain DSM 6724 / Z-1310) protein is Probable transcriptional regulatory protein Dtur_1615.